A 229-amino-acid polypeptide reads, in one-letter code: PKHD-type hydroxylase BBta_1313 (229 aa).

The Fe2OG dioxygenase domain maps to 78–180 (HIFPPLFNRY…RIASFFWLQS (103 aa)). Residues His-98, Asp-100, and His-161 each coordinate Fe cation. Arg-171 contacts 2-oxoglutarate.

The cofactor is Fe(2+). Requires L-ascorbate as cofactor.

This is PKHD-type hydroxylase BBta_1313 from Bradyrhizobium sp. (strain BTAi1 / ATCC BAA-1182).